The sequence spans 239 residues: MKLSTIFTAFAATIATVAGYETTGSKQTVDILIDYIIKETPELSQNDVANWENGDTVTLQYVVNNNEESEITVVGVTGQFKNPVNNEIVTNLTTGKVGPIAVPPGEAIKFDQKINVDLIPANYELIPYVFIAQDSLIKVIPCRGQLATIVDAAVSFFDPRLIFLELVLLITFAGLIYVGYEIWGKQYFKGVASVKAKKVSAAKASSPVASGPSTTSATGYDTNWIPESHLKQKKTKKVN.

A signal peptide spans 1–19 (MKLSTIFTAFAATIATVAG). The Lumenal portion of the chain corresponds to 20-161 (YETTGSKQTV…AAVSFFDPRL (142 aa)). A helical transmembrane segment spans residues 162–182 (IFLELVLLITFAGLIYVGYEI). Topologically, residues 183–239 (WGKQYFKGVASVKAKKVSAAKASSPVASGPSTTSATGYDTNWIPESHLKQKKTKKVN) are cytoplasmic. The span at 201-213 (AAKASSPVASGPS) shows a compositional bias: low complexity. Residues 201–222 (AAKASSPVASGPSTTSATGYDT) form a disordered region.

It belongs to the IRC22 family.

The protein localises to the endoplasmic reticulum membrane. Its function is as follows. Is probably involved in a pathway contributing to genomic integrity. The protein is Increased recombination centers protein 22-1 (IRC22-1) of Candida albicans (strain WO-1) (Yeast).